Here is a 133-residue protein sequence, read N- to C-terminus: DUF35 domain-containing scaffold protein (133 aa).

4 residues coordinate Zn(2+): C23, C26, C37, and C40.

This sequence belongs to the scaffold protein DUF35 family. In terms of assembly, interacts with acetoacetyl-CoA thiolase and HMG-CoA synthase (HMGCS) that catalyzes the first and second step in the mevalonate pathway, respectively.

Functionally, functions as a scaffold to connect the acetoacetyl-CoA thiolase and HMG-CoA synthase (HMGCS) dimers in the channeling thiolase/HMGCS complex, which allows for efficient coupling of the endergonic thiolase reaction with the exergonic HMGCS reaction. The protein is DUF35 domain-containing scaffold protein of Methanothermobacter thermautotrophicus (strain ATCC 29096 / DSM 1053 / JCM 10044 / NBRC 100330 / Delta H) (Methanobacterium thermoautotrophicum).